The sequence spans 468 residues: Heat stress transcription factor A-1e (468 aa).

The DNA-binding element occupies 21–115 (IPPFLSKTYD…ILKSIVRRKP (95 aa)). Residues 133 to 199 (ACVEVGKFGL…QMMSFLAKAV (67 aa)) are hydrophobic repeat HR-A/B. The span at 211–220 (QSNEANQHIS) shows a compositional bias: polar residues. Disordered regions lie at residues 211–244 (QSNE…VNGL) and 268–309 (QMSN…PEVT). The Nuclear localization signal motif lies at 223-227 (NKKRR). The span at 277–305 (SLSSNNGSFLLGDVPNSNISDNGSSSNGS) shows a compositional bias: low complexity. Positions 402-411 (DSFWEQFIGE) match the AHA motif. The Nuclear export signal signature appears at 454-461 (LTEQMGLL).

The protein belongs to the HSF family. Class A subfamily. Homotrimer. In terms of processing, exhibits temperature-dependent phosphorylation.

It is found in the cytoplasm. The protein localises to the nucleus. Its function is as follows. Transcriptional activator that specifically binds DNA sequence 5'-AGAAnnTTCT-3' known as heat shock promoter elements (HSE). The polypeptide is Heat stress transcription factor A-1e (HSFA1E) (Arabidopsis thaliana (Mouse-ear cress)).